A 320-amino-acid polypeptide reads, in one-letter code: o-succinylbenzoate synthase (320 aa).

The Proton donor role is filled by lysine 133. Mg(2+)-binding residues include aspartate 161, glutamate 190, and aspartate 213. The Proton acceptor role is filled by lysine 235.

Belongs to the mandelate racemase/muconate lactonizing enzyme family. MenC type 1 subfamily. Requires a divalent metal cation as cofactor.

The catalysed reaction is (1R,6R)-6-hydroxy-2-succinyl-cyclohexa-2,4-diene-1-carboxylate = 2-succinylbenzoate + H2O. The protein operates within quinol/quinone metabolism; 1,4-dihydroxy-2-naphthoate biosynthesis; 1,4-dihydroxy-2-naphthoate from chorismate: step 4/7. It participates in quinol/quinone metabolism; menaquinone biosynthesis. Its function is as follows. Converts 2-succinyl-6-hydroxy-2,4-cyclohexadiene-1-carboxylate (SHCHC) to 2-succinylbenzoate (OSB). The sequence is that of o-succinylbenzoate synthase from Shigella sonnei (strain Ss046).